The following is a 108-amino-acid chain: uncharacterized protein (108 aa).

The disordered stretch occupies residues 75–94; the sequence is TPQVSSFPSSTTSLSHSCTT. Low complexity predominate over residues 79-94; it reads SSFPSSTTSLSHSCTT.

This is an uncharacterized protein from Homo sapiens (Human).